The chain runs to 238 residues: Small ribosomal subunit protein uS2c (238 aa).

This sequence belongs to the universal ribosomal protein uS2 family.

The protein resides in the plastid. The protein localises to the chloroplast. The chain is Small ribosomal subunit protein uS2c (rps2) from Jasminum nudiflorum (Winter jasmine).